Consider the following 273-residue polypeptide: Formamidopyrimidine-DNA glycosylase (273 aa).

Pro2 (schiff-base intermediate with DNA) is an active-site residue. Glu3 functions as the Proton donor in the catalytic mechanism. Residue Lys58 is the Proton donor; for beta-elimination activity of the active site. Residues His92, Arg111, and Arg153 each contribute to the DNA site. The segment at 238–272 (RVYGREGQKCFNCSSTILKTKNSGRSTFYCKTCQY) adopts an FPG-type zinc-finger fold. The active-site Proton donor; for delta-elimination activity is Arg262.

This sequence belongs to the FPG family. In terms of assembly, monomer. It depends on Zn(2+) as a cofactor.

The catalysed reaction is Hydrolysis of DNA containing ring-opened 7-methylguanine residues, releasing 2,6-diamino-4-hydroxy-5-(N-methyl)formamidopyrimidine.. It catalyses the reaction 2'-deoxyribonucleotide-(2'-deoxyribose 5'-phosphate)-2'-deoxyribonucleotide-DNA = a 3'-end 2'-deoxyribonucleotide-(2,3-dehydro-2,3-deoxyribose 5'-phosphate)-DNA + a 5'-end 5'-phospho-2'-deoxyribonucleoside-DNA + H(+). Functionally, involved in base excision repair of DNA damaged by oxidation or by mutagenic agents. Acts as a DNA glycosylase that recognizes and removes damaged bases. Has a preference for oxidized purines, such as 7,8-dihydro-8-oxoguanine (8-oxoG). Has AP (apurinic/apyrimidinic) lyase activity and introduces nicks in the DNA strand. Cleaves the DNA backbone by beta-delta elimination to generate a single-strand break at the site of the removed base with both 3'- and 5'-phosphates. This chain is Formamidopyrimidine-DNA glycosylase, found in Rickettsia canadensis (strain McKiel).